A 671-amino-acid chain; its full sequence is MMDNQAVKSLLEMGIPHEVAVDALQRTGGNLEAAVNFIFSNELPEQAEMGEENDGSQPRISENKIVAGTKPCDVPNNGDQDIDMPDVSGVDVDYDDDEDITDERSGSNSTSGCRVTAQNYDRYSISETSIPPPSYSIVQHNEFKSNVGDPTVVLPLPLNSLIESYFGLFALLTAVYFPHVFLKPDFKDLNYRADWFKGSSFTEPKYRLAYCEAEDGSTTSEIVLASGPNEGLQPHLLWQLQKLISVVNTRKCERAFVSAKVFTSSLEPQLRSKLADSEHLYEVLPAFIKSLAVDLEMCPGIRDRETRSLFISSALHTPNKNEPPMETFLSLFHFLPEEYDSNLYKMFNVLLYPEEEEEEEDVIRGGEQEEARYVEPENTLKEVAPVLTILFNELETNTESVSLPNGVDIPLEFYPQLYTKQCKDQLIRHIISKRKQARTRSRCLLQEINELKSYQGKNISTILESTLAYLQTIPDDANNEAAKQIASLKDTLNSARAAKMEEYKDLASKLHGEWNLSHPETHIINTAKQLGLIENPYILTMAALSPYSYFIRSRNGAWSWIQSNTLGTEFKVKKCSSPSVVQEAIKHGTKYASETPLMFIYCEEGKIPTEEVVAEALKSNSGCLKFAEDDQNSLKTLRSQFFDGMGDPEQATNNINNGNDNDNDDDIDSDN.

One can recognise a UBA domain in the interval methionine 1–asparagine 41. Serine 56 carries the phosphoserine modification. The segment at glycine 68–valine 87 is disordered. The stretch at serine 432–glutamate 501 forms a coiled coil. The tract at residues aspartate 643–asparagine 671 is disordered. Residues asparagine 661–asparagine 671 show a composition bias toward acidic residues.

Forms a ternary complex with RSP5 and UBP2.

It is found in the cytoplasm. The protein resides in the nucleus. Functionally, modulates the activity of the RSP5 HECT ubiquitin-protein ligase through its mediation of the interaction between RSP5 and the deubiquitinase UBP2. Involved in regulation of cell wall homeostasis. The protein is UBA domain-containing protein RUP1 (RUP1) of Saccharomyces cerevisiae (strain ATCC 204508 / S288c) (Baker's yeast).